The following is a 492-amino-acid chain: Probable cytochrome P450 516B1 (492 aa).

A helical transmembrane segment spans residues 1–17 (MYLILSLIIFLAYVAFH). Residue Cys-438 coordinates heme.

Belongs to the cytochrome P450 family. The cofactor is heme.

It is found in the membrane. This is Probable cytochrome P450 516B1 (cyp516B1) from Dictyostelium discoideum (Social amoeba).